Here is a 227-residue protein sequence, read N- to C-terminus: PKHD-type hydroxylase Bpro_3048 (227 aa).

One can recognise a Fe2OG dioxygenase domain in the interval 78–179 (KIFTPRINRY…RLACFFWVES (102 aa)). Positions 97, 99, and 160 each coordinate Fe cation. A 2-oxoglutarate-binding site is contributed by Arg-170.

The cofactor is Fe(2+). L-ascorbate serves as cofactor.

This is PKHD-type hydroxylase Bpro_3048 from Polaromonas sp. (strain JS666 / ATCC BAA-500).